Consider the following 321-residue polypeptide: Calcium-binding protein LPS1-alpha (321 aa).

8 consecutive EF-hand domains span residues 15–49 (DAIE…NWTE), 47–82 (WTEE…STKE), 85–120 (YSSD…IYTK), 121–156 (VVDG…KLPI), 165–200 (EYRE…STKY), 200–233 (YSDK…DGVS), 232–267 (VSKD…IYRQ), and 269–304 (VDFE…NCPY). Residues aspartate 29, asparagine 31, aspartate 33, threonine 35, glutamate 40, aspartate 60, asparagine 62, aspartate 64, histidine 66, glutamate 71, aspartate 98, aspartate 100, asparagine 102, arginine 104, glutamate 109, aspartate 134, aspartate 136, aspartate 138, histidine 140, glutamate 145, aspartate 178, asparagine 180, aspartate 182, serine 184, glutamate 189, aspartate 213, asparagine 215, aspartate 217, arginine 219, glutamate 224, aspartate 245, aspartate 247, asparagine 249, lysine 251, glutamate 256, aspartate 284, aspartate 286, tyrosine 288, and glutamate 293 each contribute to the Ca(2+) site.

Aboral ectoderm, a squamous epithelium covering the surface of the late stage embryo and larva.

In terms of biological role, calcium-binding protein involved in larval development and metamorphosis. Likely to function as calcium buffers mediating the transport of calcium from the sea water to the blastocoel where calcium is required for skeleton formation. This chain is Calcium-binding protein LPS1-alpha, found in Lytechinus pictus (Painted sea urchin).